The sequence spans 596 residues: mRNA export factor mex67 (596 aa).

A phosphoserine mark is found at serine 128, serine 130, and serine 133. LRR repeat units follow at residues aspartate 215 to alanine 236, lysine 241 to serine 262, and proline 263 to threonine 282. The region spanning threonine 283–isoleucine 338 is the LRRCT domain. An NTF2 domain is found at isoleucine 338 to isoleucine 499. A TAP-C domain is found at aspartate 543–serine 596.

It belongs to the NXF family. In terms of assembly, interacts with mlo3 and rae1.

The protein localises to the nucleus. The protein resides in the cytoplasm. In terms of biological role, involved in the export of mRNA from the nucleus to the cytoplasm. The sequence is that of mRNA export factor mex67 (mex67) from Schizosaccharomyces pombe (strain 972 / ATCC 24843) (Fission yeast).